Consider the following 506-residue polypeptide: UDP-N-acetylmuramoylalanine--D-glutamate ligase (506 aa).

Residue Gly128–Thr134 coordinates ATP.

It belongs to the MurCDEF family.

It localises to the cytoplasm. It catalyses the reaction UDP-N-acetyl-alpha-D-muramoyl-L-alanine + D-glutamate + ATP = UDP-N-acetyl-alpha-D-muramoyl-L-alanyl-D-glutamate + ADP + phosphate + H(+). It functions in the pathway cell wall biogenesis; peptidoglycan biosynthesis. Cell wall formation. Catalyzes the addition of glutamate to the nucleotide precursor UDP-N-acetylmuramoyl-L-alanine (UMA). In Albidiferax ferrireducens (strain ATCC BAA-621 / DSM 15236 / T118) (Rhodoferax ferrireducens), this protein is UDP-N-acetylmuramoylalanine--D-glutamate ligase.